Reading from the N-terminus, the 442-residue chain is NADH-quinone oxidoreductase subunit D (442 aa).

The protein belongs to the complex I 49 kDa subunit family. In terms of assembly, NDH-1 is composed of 14 different subunits. Subunits NuoB, C, D, E, F, and G constitute the peripheral sector of the complex.

The protein resides in the cell membrane. It carries out the reaction a quinone + NADH + 5 H(+)(in) = a quinol + NAD(+) + 4 H(+)(out). In terms of biological role, NDH-1 shuttles electrons from NADH, via FMN and iron-sulfur (Fe-S) centers, to quinones in the respiratory chain. The immediate electron acceptor for the enzyme in this species is believed to be a menaquinone. Couples the redox reaction to proton translocation (for every two electrons transferred, four hydrogen ions are translocated across the cytoplasmic membrane), and thus conserves the redox energy in a proton gradient. This chain is NADH-quinone oxidoreductase subunit D, found in Mycolicibacterium vanbaalenii (strain DSM 7251 / JCM 13017 / BCRC 16820 / KCTC 9966 / NRRL B-24157 / PYR-1) (Mycobacterium vanbaalenii).